Consider the following 164-residue polypeptide: Transcriptional regulator MraZ (164 aa).

2 SpoVT-AbrB domains span residues 7–60 (HFTN…EIDE) and 83–126 (SEIL…EPGR). The segment at 141 to 164 (LRKQLSSRPVAPDAQPPRPHGARE) is disordered. Residues 154–164 (AQPPRPHGARE) are compositionally biased toward pro residues.

It belongs to the MraZ family. In terms of assembly, forms oligomers.

The protein resides in the cytoplasm. It localises to the nucleoid. This chain is Transcriptional regulator MraZ, found in Beijerinckia indica subsp. indica (strain ATCC 9039 / DSM 1715 / NCIMB 8712).